Reading from the N-terminus, the 652-residue chain is UvrABC system protein C (652 aa).

Positions 37-116 constitute a GIY-YIG domain; sequence KSSGCYLFKD…IKTNKPYFNI (80 aa). Positions 226–261 constitute a UVR domain; sequence DDLEIFLQKKMLQFSNDLDYENAAKIRDQISGLKLL.

The protein belongs to the UvrC family. Interacts with UvrB in an incision complex.

The protein resides in the cytoplasm. In terms of biological role, the UvrABC repair system catalyzes the recognition and processing of DNA lesions. UvrC both incises the 5' and 3' sides of the lesion. The N-terminal half is responsible for the 3' incision and the C-terminal half is responsible for the 5' incision. The protein is UvrABC system protein C of Prochlorococcus marinus (strain MIT 9312).